We begin with the raw amino-acid sequence, 86 residues long: Probable weak neurotoxin NNAM3 (86 aa).

The signal sequence occupies residues 1–21; it reads MKTLLLTLVVVTIVCLDLGYT. 5 disulfides stabilise this stretch: Cys24/Cys45, Cys27/Cys32, Cys38/Cys63, Cys67/Cys78, and Cys79/Cys84.

Belongs to the three-finger toxin family. Ancestral subfamily. Orphan group II sub-subfamily. Expressed by the venom gland.

The protein localises to the secreted. Binds with low affinity to muscular (alpha-1-beta-1-delta-epsilon/CHRNA1-CHRNB1-CHRND-CHRNE) and very low affinity to neuronal (alpha-7/CHRNA7) nicotinic acetylcholine receptor (nAChR). This chain is Probable weak neurotoxin NNAM3, found in Naja atra (Chinese cobra).